The sequence spans 100 residues: Urease subunit gamma (100 aa).

It belongs to the urease gamma subunit family. In terms of assembly, heterotrimer of UreA (gamma), UreB (beta) and UreC (alpha) subunits. Three heterotrimers associate to form the active enzyme.

The protein localises to the cytoplasm. It catalyses the reaction urea + 2 H2O + H(+) = hydrogencarbonate + 2 NH4(+). It functions in the pathway nitrogen metabolism; urea degradation; CO(2) and NH(3) from urea (urease route): step 1/1. In Saccharophagus degradans (strain 2-40 / ATCC 43961 / DSM 17024), this protein is Urease subunit gamma.